We begin with the raw amino-acid sequence, 491 residues long: MTTWDKCLKKIKKNLSTFEYKTWIKPIHVEQNSNLFTVYCNNEYFKKHIKSKYGNLILSTIQECHGNDLIIEYSNKKFSGEKITEVITAGPQANFFSTTSVEIKDESEDTKVVQEPKISKKSNSKDFSSSQELFGFDEAMLITAKEDEEYSFGLPLKEKYVFDSFVVGDANKIARAAAMQVSINPGKLHNPLFIYGGSGLGKTHLMQAIGNHAREVNPNAKIIYTNSEQFIKDYVNSIRLQDQDEFQRVYRSADILLIDDIQFIAGKEGTAQEFFHTFNALYENGKQIILTSDKYPNEIEGLEERLVSRFGYGLTVSVDMPDLETRIAILLKKAHDLGQKLPNETAAFIAENVRTNVRELEGALNRVLTTSKFNHKDPTIEVAQACLRDVIKIQEKKVKIDNIQKVVADFYRIRVKDLTSNQRSRNIARPRQIAMSLARELTSHSLPEIGNAFGGRDHTTVMHAVKAITKLRQSNTSISDDYELLLNKISR.

Residues 1 to 69 form a domain I, interacts with DnaA modulators region; it reads MTTWDKCLKK…TIQECHGNDL (69 aa). The tract at residues 69–154 is domain II; sequence LIIEYSNKKF…KEDEEYSFGL (86 aa). Positions 155-371 are domain III, AAA+ region; it reads PLKEKYVFDS…GALNRVLTTS (217 aa). Residues Gly-199, Gly-201, Lys-202, and Thr-203 each coordinate ATP. A domain IV, binds dsDNA region spans residues 372–491; the sequence is KFNHKDPTIE…YELLLNKISR (120 aa).

It belongs to the DnaA family. Oligomerizes as a right-handed, spiral filament on DNA at oriC.

It localises to the cytoplasm. In terms of biological role, plays an essential role in the initiation and regulation of chromosomal replication. ATP-DnaA binds to the origin of replication (oriC) to initiate formation of the DNA replication initiation complex once per cell cycle. Binds the DnaA box (a 9 base pair repeat at the origin) and separates the double-stranded (ds)DNA. Forms a right-handed helical filament on oriC DNA; dsDNA binds to the exterior of the filament while single-stranded (ss)DNA is stabiized in the filament's interior. The ATP-DnaA-oriC complex binds and stabilizes one strand of the AT-rich DNA unwinding element (DUE), permitting loading of DNA polymerase. After initiation quickly degrades to an ADP-DnaA complex that is not apt for DNA replication. Binds acidic phospholipids. The sequence is that of Chromosomal replication initiator protein DnaA from Francisella tularensis subsp. tularensis (strain WY96-3418).